The primary structure comprises 354 residues: Methylthioribose-1-phosphate isomerase (354 aa).

Substrate-binding positions include 58-60 (RGA), arginine 101, and glutamine 204. Aspartate 245 (proton donor) is an active-site residue. Position 255-256 (255-256 (NK)) interacts with substrate.

This sequence belongs to the eIF-2B alpha/beta/delta subunits family. MtnA subfamily.

The catalysed reaction is 5-(methylsulfanyl)-alpha-D-ribose 1-phosphate = 5-(methylsulfanyl)-D-ribulose 1-phosphate. It functions in the pathway amino-acid biosynthesis; L-methionine biosynthesis via salvage pathway; L-methionine from S-methyl-5-thio-alpha-D-ribose 1-phosphate: step 1/6. Catalyzes the interconversion of methylthioribose-1-phosphate (MTR-1-P) into methylthioribulose-1-phosphate (MTRu-1-P). This is Methylthioribose-1-phosphate isomerase from Xanthomonas axonopodis pv. citri (strain 306).